We begin with the raw amino-acid sequence, 323 residues long: AA9 family lytic polysaccharide monooxygenase B (323 aa).

The signal sequence occupies residues 1–18 (MKSFTLTTLAALAGNAAA). 2 residues coordinate Cu(2+): H19 and H97. C56 and C191 are joined by a disulfide. O2-binding residues include H177 and Q186. Y188 lines the Cu(2+) pocket. The CBM1 domain occupies 286-323 (CTVQKYQQCGGQGYTGCTNCASGSTCSAVSPPYYSQCV).

Belongs to the polysaccharide monooxygenase AA9 family. It depends on Cu(2+) as a cofactor.

Its subcellular location is the secreted. It catalyses the reaction [(1-&gt;4)-beta-D-glucosyl]n+m + reduced acceptor + O2 = 4-dehydro-beta-D-glucosyl-[(1-&gt;4)-beta-D-glucosyl]n-1 + [(1-&gt;4)-beta-D-glucosyl]m + acceptor + H2O.. Its activity is regulated as follows. Is able to utilize various natural phenolic compounds as reducing agents. Most of these reducing agents are present in plants, either free or as lignin building blocks, such as sinapic acid, or as flavonoids such as catechin and dopamine. Phenolic compounds with 1,2-benzenediol and 1,2,3-benzenetriol moieties yield the highest release of oxidized and non-oxidized glucooligosaccharides from cellulose compared to monophenols or sulfur-containing compounds. Lytic polysaccharide monooxygenase (LPMO) that depolymerizes crystalline and amorphous polysaccharides via the oxidation of scissile alpha- or beta-(1-4)-glycosidic bonds, yielding C1 oxidation products. Catalysis by LPMOs requires the reduction of the active-site copper from Cu(II) to Cu(I) by a reducing agent and H(2)O(2) or O(2) as a cosubstrate. Is active on regenerated amorphous cellulose (RAC). In Thermothelomyces thermophilus (strain ATCC 42464 / BCRC 31852 / DSM 1799) (Sporotrichum thermophile), this protein is AA9 family lytic polysaccharide monooxygenase B.